The sequence spans 414 residues: Wilms tumor protein homolog A (414 aa).

Residues Lys55 and Lys158 each participate in a glycyl lysine isopeptide (Lys-Gly) (interchain with G-Cter in SUMO) cross-link. The 9aaTAD motif lies at 217–225 (MTWNQMNLG). 3 C2H2-type zinc fingers span residues 288-312 (FMCA…SRKH), 318-342 (YQCD…QRRH), and 348-370 (FQCK…TRTH). Important for interaction with target DNA regions lie at residues 332-346 (SDQL…TGIK) and 358-366 (SRSDHLKTH). The KTS motif motif lies at 373-375 (KTS). The segment at 379–403 (FSCRWPSCQKKFARSDELVRHHNMH) adopts a C2H2-type 4 zinc-finger fold.

This sequence belongs to the EGR C2H2-type zinc-finger protein family. As to expression, expressed around the pronephric anlage and in the pronephros; expression is restricted to the splanchnic mesoderm (the site where the glomus forms) from tailbud stages, and the glomus of early tadpoles. Not expressed in the pronephric tubules or pronephric duct. In tadpoles (stage 38-39), additional expression begins in the heart. Also expressed in the adult kidney (mesonephros).

It is found in the nucleus. The protein resides in the cytoplasm. It localises to the nucleus speckle. Transcription factor required for development of the vascular component of the pronephric kidney, the glomus; may repress tubule-specific gene expression in the portion of the pronephros fated to form the glomus. Recognizes and binds to the DNA sequence 5'-GCG(T/G)GGGCG-3'. Inhibits Wnt-signaling during embryonic development. Function may be isoform-specific: the isoform containing the KTS motif is less effective in inhibiting wnt signaling. The protein is Wilms tumor protein homolog A (wt1-a) of Xenopus laevis (African clawed frog).